The following is a 2629-amino-acid chain: Telomerase protein component 1 (2629 aa).

4 TEP1 N-terminal repeats span residues 1–30, 31–60, 61–90, and 91–120; these read MEKL…DLQP, LEKI…DLQP, TERI…DLQP, and LEKL…TVKS. Positions 227–685 constitute a TROVE domain; sequence LKLTSGDSGF…VKHNLSPMPG (459 aa). Residues 386-397 are compositionally biased toward basic residues; that stretch reads PRKHRSKRRSRQ. The disordered stretch occupies residues 386-412; the sequence is PRKHRSKRRSRQPPRPQKTERPFSERG. Residues 402–412 show a composition bias toward basic and acidic residues; the sequence is QKTERPFSERG. The NACHT domain maps to 1171-1578; sequence RLSLVTGQAG…EFLTNLHVVA (408 aa). ATP is bound at residue 1177–1184; it reads GQAGQGKT. WD repeat units lie at residues 1420–1462, 1681–1720, 1723–1761, 1764–1803, 1805–1844, 1847–1886, 1889–1930, 1932–1971, 1974–2013, 2015–2054, 2067–2106, 2113–2151, 2154–2191, 2193–2241, 2244–2282, 2285–2324, 2326–2362, 2375–2424, 2467–2507, 2555–2592, and 2594–2628; these read VLPQ…EVLA, TMSS…EEKA, SGCD…WVFQ, AHQY…LAFQ, THPK…VTKE, APGP…RLAA, AQCG…GCLG, LPLS…QGPQ, ELNV…HSLW, LSRY…QPHV, GHEG…APLL, CHRD…QLGQ, GHQS…LTSI, AHSG…QIRT, GHSG…DDSY, RSSV…ATAQ, PGRV…GSTS, EDWG…SSIL, PNGS…GEWI, IHLG…LLGL, and RCEG…FLSW.

Associated component of the telomerase holoenzyme complex. Component of the vault ribonucleoprotein particle, at least composed of MVP, PARP4 and one or more vault RNAs (vRNAs). Binds to VAULTRC1, VAULTRC2 and VAULTRC4/hvg4 vRNAs. Ubiquitous.

The protein resides in the nucleus. It is found in the chromosome. The protein localises to the telomere. In terms of biological role, component of the telomerase ribonucleoprotein complex that is essential for the replication of chromosome termini. Also a component of the ribonucleoprotein vaults particle, a multi-subunit structure involved in nucleo-cytoplasmic transport. Responsible for the localizing and stabilizing vault RNA (vRNA) association in the vault ribonucleoprotein particle. The sequence is that of Telomerase protein component 1 (Tep1) from Mus musculus (Mouse).